The following is a 323-amino-acid chain: MTVNLDPDKVWIDGCFDFTHHGHAGAILQARRTVSKENGKLFCGVHTDEDIQHNKGTPVMNSSERYEHTRSNRWCSEVVEAAPYVTDPNWMDKYQCQYVVHGDDITIDANGEDCYKLVKEMGRFKVVKRTYGVSTTEIIHRILTKKSLPPTHPDYYPTTQELSFYSVAQDAVSKHCYVFQRDLDNVLVNGGYKFDAEDCVYVDGDFDLFHMGDIDQLRKLKMDLHPDKKLIVGITTSDYSSTIMTMKERVLSVLSCKYVDAVIIDADATSMSQYNCEKYHIGTAVLTAAGKFSEYLTKELIVKRVESQREVYIARNQKKGMSI.

The protein belongs to the cytidylyltransferase family.

The protein resides in the cytoplasm. Its subcellular location is the nucleus. It carries out the reaction phosphoethanolamine + CTP + H(+) = CDP-ethanolamine + diphosphate. The protein operates within phospholipid metabolism; phosphatidylethanolamine biosynthesis; phosphatidylethanolamine from ethanolamine: step 2/3. Functionally, ethanolamine-phosphate cytidylyltransferase which catalyzes the second step of phosphatidylethanolamine biosynthesis. Involved in the maintenance of plasma membrane and required for proper sporulation. The polypeptide is Ethanolamine-phosphate cytidylyltransferase (Saccharomyces cerevisiae (strain ATCC 204508 / S288c) (Baker's yeast)).